Here is a 402-residue protein sequence, read N- to C-terminus: Phosphopentomutase (402 aa).

Mn(2+) is bound by residues Asp10, Asp301, His306, Asp342, His343, and His354.

The protein belongs to the phosphopentomutase family. Mn(2+) is required as a cofactor.

It is found in the cytoplasm. The catalysed reaction is 2-deoxy-alpha-D-ribose 1-phosphate = 2-deoxy-D-ribose 5-phosphate. The enzyme catalyses alpha-D-ribose 1-phosphate = D-ribose 5-phosphate. Its pathway is carbohydrate degradation; 2-deoxy-D-ribose 1-phosphate degradation; D-glyceraldehyde 3-phosphate and acetaldehyde from 2-deoxy-alpha-D-ribose 1-phosphate: step 1/2. Functionally, isomerase that catalyzes the conversion of deoxy-ribose 1-phosphate (dRib-1-P) and ribose 1-phosphate (Rib-1-P) to deoxy-ribose 5-phosphate (dRib-5-P) and ribose 5-phosphate (Rib-5-P), respectively. In Aeromonas hydrophila subsp. hydrophila (strain ATCC 7966 / DSM 30187 / BCRC 13018 / CCUG 14551 / JCM 1027 / KCTC 2358 / NCIMB 9240 / NCTC 8049), this protein is Phosphopentomutase.